The following is a 225-amino-acid chain: MGEPATDAWTGPMAWTGPMVVLVGAPGAGKTTVGTQLARRWGVGFRDTDADIEAALGTTVADIFLDHGEEYFRLAERRAVAAALADHRGVLALGGGAVLDAENRTLLAGHRVVYLEVGVSDAVRRVGLARDRPLLVEGPRTRLAALLRARRPLYAEVATVVIDTAGHEPDEVTDLLAAALGPLLAGGSEPDEAADAAGGSEPDEAADAAGGSEPDEAADAAGGKR.

27-32 (GAGKTT) lines the ATP pocket. Threonine 31 provides a ligand contact to Mg(2+). Residues aspartate 49, arginine 73, and glycine 95 each contribute to the substrate site. Residue arginine 132 coordinates ATP. Arginine 150 serves as a coordination point for substrate. Residues 186-225 (GGSEPDEAADAAGGSEPDEAADAAGGSEPDEAADAAGGKR) are disordered.

The protein belongs to the shikimate kinase family. Monomer. Requires Mg(2+) as cofactor.

It is found in the cytoplasm. The enzyme catalyses shikimate + ATP = 3-phosphoshikimate + ADP + H(+). It participates in metabolic intermediate biosynthesis; chorismate biosynthesis; chorismate from D-erythrose 4-phosphate and phosphoenolpyruvate: step 5/7. In terms of biological role, catalyzes the specific phosphorylation of the 3-hydroxyl group of shikimic acid using ATP as a cosubstrate. This is Shikimate kinase from Frankia casuarinae (strain DSM 45818 / CECT 9043 / HFP020203 / CcI3).